Consider the following 152-residue polypeptide: MQLTELIETTVVGLGYELVDLERTGRGMLCIYIDQPAGIAIEDCEKVTRQLQHVLTVENIDYERLEVSSPGLDRPLKKLADFERFAGSEVVITLKKPLDGRKSYRGILHAPQGETIGLEFEGKEGAAMLDFTLADMDKARLVPKVDFRSRKQ.

Belongs to the RimP family.

The protein localises to the cytoplasm. In terms of biological role, required for maturation of 30S ribosomal subunits. This chain is Ribosome maturation factor RimP, found in Paraburkholderia xenovorans (strain LB400).